A 638-amino-acid chain; its full sequence is 1-deoxy-D-xylulose-5-phosphate synthase (638 aa).

Thiamine diphosphate is bound by residues H75 and 116–118 (AHS). Position 147 (D147) interacts with Mg(2+). Residues 148-149 (GA), N177, Y288, and E370 each bind thiamine diphosphate. Mg(2+) is bound at residue N177.

The protein belongs to the transketolase family. DXPS subfamily. As to quaternary structure, homodimer. Mg(2+) serves as cofactor. The cofactor is thiamine diphosphate.

It catalyses the reaction D-glyceraldehyde 3-phosphate + pyruvate + H(+) = 1-deoxy-D-xylulose 5-phosphate + CO2. The protein operates within metabolic intermediate biosynthesis; 1-deoxy-D-xylulose 5-phosphate biosynthesis; 1-deoxy-D-xylulose 5-phosphate from D-glyceraldehyde 3-phosphate and pyruvate: step 1/1. Its function is as follows. Catalyzes the acyloin condensation reaction between C atoms 2 and 3 of pyruvate and glyceraldehyde 3-phosphate to yield 1-deoxy-D-xylulose-5-phosphate (DXP). This is 1-deoxy-D-xylulose-5-phosphate synthase from Cupriavidus taiwanensis (strain DSM 17343 / BCRC 17206 / CCUG 44338 / CIP 107171 / LMG 19424 / R1) (Ralstonia taiwanensis (strain LMG 19424)).